The primary structure comprises 399 residues: Arylacetamide deacetylase (399 aa).

Residues 1–4 (MRKK) are Cytoplasmic-facing. The helical; Signal-anchor for type II membrane protein transmembrane segment at 5–25 (YFGFLILGVLLAGYIYVPLPD) threads the bilayer. Over 26–399 (NVEEPWKIML…QYINWLHENL (374 aa)) the chain is Lumenal. Positions 111 to 113 (HGG) match the Involved in the stabilization of the negatively charged intermediate by the formation of the oxyanion hole motif. The cysteines at positions 116 and 340 are disulfide-linked. Residue serine 189 is part of the active site. N-linked (GlcNAc...) asparagine glycosylation is present at asparagine 282. Active-site residues include aspartate 343 and histidine 373.

This sequence belongs to the 'GDXG' lipolytic enzyme family.

The protein localises to the endoplasmic reticulum membrane. Its subcellular location is the microsome membrane. It catalyses the reaction a triacylglycerol + H2O = a diacylglycerol + a fatty acid + H(+). Its function is as follows. Displays cellular triglyceride lipase activity in liver, increases the levels of intracellular fatty acids derived from the hydrolysis of newly formed triglyceride stores and plays a role in very low-density lipoprotein assembly. Displays serine esterase activity in liver. Deacetylates a variety of arylacetamide substrates, including xenobiotic compounds and procarcinogens, converting them to the primary arylamide compounds and increasing their toxicity. In Bos taurus (Bovine), this protein is Arylacetamide deacetylase (AADAC).